The primary structure comprises 192 residues: Fe/S biogenesis protein NfuA (192 aa).

[4Fe-4S] cluster-binding residues include Cys149 and Cys152.

It belongs to the NfuA family. Homodimer. The cofactor is [4Fe-4S] cluster.

Its function is as follows. Involved in iron-sulfur cluster biogenesis. Binds a 4Fe-4S cluster, can transfer this cluster to apoproteins, and thereby intervenes in the maturation of Fe/S proteins. Could also act as a scaffold/chaperone for damaged Fe/S proteins. This is Fe/S biogenesis protein NfuA from Shewanella amazonensis (strain ATCC BAA-1098 / SB2B).